A 495-amino-acid chain; its full sequence is Aspartyl/glutamyl-tRNA(Asn/Gln) amidotransferase subunit B (495 aa).

It belongs to the GatB/GatE family. GatB subfamily. Heterotrimer of A, B and C subunits.

It carries out the reaction L-glutamyl-tRNA(Gln) + L-glutamine + ATP + H2O = L-glutaminyl-tRNA(Gln) + L-glutamate + ADP + phosphate + H(+). The enzyme catalyses L-aspartyl-tRNA(Asn) + L-glutamine + ATP + H2O = L-asparaginyl-tRNA(Asn) + L-glutamate + ADP + phosphate + 2 H(+). Functionally, allows the formation of correctly charged Asn-tRNA(Asn) or Gln-tRNA(Gln) through the transamidation of misacylated Asp-tRNA(Asn) or Glu-tRNA(Gln) in organisms which lack either or both of asparaginyl-tRNA or glutaminyl-tRNA synthetases. The reaction takes place in the presence of glutamine and ATP through an activated phospho-Asp-tRNA(Asn) or phospho-Glu-tRNA(Gln). The sequence is that of Aspartyl/glutamyl-tRNA(Asn/Gln) amidotransferase subunit B from Beijerinckia indica subsp. indica (strain ATCC 9039 / DSM 1715 / NCIMB 8712).